The following is a 630-amino-acid chain: Auxin efflux carrier component 2 (630 aa).

Topologically, residues 1-6 (MITGRD) are extracellular. The chain crosses the membrane as a helical span at residues 7–27 (IYDVLAAIVPLYVAMFLAYGS). The Cytoplasmic segment spans residues 28–38 (VRWWGIFTPDQ). Residues 39 to 59 (CSGINRFVAVFAVPLLSFHFI) form a helical membrane-spanning segment. Valine 51 contacts (indol-3-yl)acetate. The Extracellular portion of the chain corresponds to 60-70 (STNDPYSMNYR). The chain crosses the membrane as a helical span at residues 71 to 91 (FLAADSLQKLVILAALAVWHN). Topologically, residues 92–108 (LLSRYRRNGGAAASLDW) are cytoplasmic. A helical membrane pass occupies residues 109 to 129 (TITLFSLSTLPNTLVMGIPLL). (indol-3-yl)acetate is bound by residues asparagine 120 and leucine 122. Residues 130–139 (RAMYGDFSGS) are Extracellular-facing. A helical membrane pass occupies residues 140 to 160 (LMVQIVVLQSVIWYTLMLFLF). Tyrosine 153 serves as a coordination point for (indol-3-yl)acetate. Topologically, residues 161–490 (EYRGAKALIS…LIRNPNTYSS (330 aa)) are cytoplasmic. Residues 317–350 (ASGKAADPPSYPAPNPGMMPAPRKKELGGSNSNS) form a disordered region. Residues 325-335 (PSYPAPNPGMM) are compositionally biased toward pro residues. The chain crosses the membrane as a helical span at residues 491 to 511 (LIGLVWSLVSFRWNIQMPSII). The Extracellular segment spans residues 512 to 514 (KGS). The helical transmembrane segment at 515–535 (ISILSDAGLGMAMFSLGLFMA) threads the bilayer. At 536-549 (LQPKIISCGKTVAT) the chain is on the cytoplasmic side. A helical membrane pass occupies residues 550 to 570 (FAMAVRFLTGPAVIAATSIAI). Residues 571 to 574 (GLRG) are Extracellular-facing. Residues 575-595 (VLLHVAIVQAALPQGIVPFVF) traverse the membrane as a helical segment. Positions 590 and 591 each coordinate (indol-3-yl)acetate. Residues 596–609 (AKEYNCHPQILSTA) lie on the Cytoplasmic side of the membrane. A helical transmembrane segment spans residues 610 to 630 (VIFGMLIALPITILYYVLLGI).

This sequence belongs to the auxin efflux carrier (TC 2.A.69.1) family. Homodimer. Expressed in roots, leaves, shoot apex and panicles. Expressed in roots, stem bases and young panicles.

Its subcellular location is the membrane. Functionally, acts as a component of the auxin efflux carrier. Involved in the basipetal polar auxin transport which contributes to the spreading growth of the tillers. The sequence is that of Auxin efflux carrier component 2 from Oryza sativa subsp. japonica (Rice).